Reading from the N-terminus, the 302-residue chain is Ornithine carbamoyltransferase (302 aa).

Residues 52–55 (STRT), Gln-79, Arg-103, and 130–133 (HPCQ) each bind carbamoyl phosphate. L-ornithine contacts are provided by residues Asn-161, Asp-221, and 225 to 226 (SM). Residues 261–262 (CL) and Arg-289 contribute to the carbamoyl phosphate site.

It belongs to the aspartate/ornithine carbamoyltransferase superfamily. OTCase family.

The protein localises to the cytoplasm. The enzyme catalyses carbamoyl phosphate + L-ornithine = L-citrulline + phosphate + H(+). Its pathway is amino-acid biosynthesis; L-arginine biosynthesis; L-arginine from L-ornithine and carbamoyl phosphate: step 1/3. Reversibly catalyzes the transfer of the carbamoyl group from carbamoyl phosphate (CP) to the N(epsilon) atom of ornithine (ORN) to produce L-citrulline. This chain is Ornithine carbamoyltransferase, found in Methanosarcina mazei (strain ATCC BAA-159 / DSM 3647 / Goe1 / Go1 / JCM 11833 / OCM 88) (Methanosarcina frisia).